The primary structure comprises 226 residues: Chalcone--flavanone isomerase (226 aa).

Positions 51, 116, and 194 each coordinate substrate.

It belongs to the chalcone isomerase family.

It carries out the reaction a chalcone = a flavanone.. The protein operates within secondary metabolite biosynthesis; flavonoid biosynthesis. Its function is as follows. Catalyzes the intramolecular cyclization of bicyclic chalcones into tricyclic (S)-flavanones. Responsible for the isomerization of 4,2',4',6'-tetrahydroxychalcone (also termed chalcone) into naringenin. This is Chalcone--flavanone isomerase (CHI) from Canna generalis (Canna lily).